Here is a 258-residue protein sequence, read N- to C-terminus: Imidazole glycerol phosphate synthase subunit HisF (258 aa).

Active-site residues include Asp-11 and Asp-130.

Belongs to the HisA/HisF family. As to quaternary structure, heterodimer of HisH and HisF.

The protein localises to the cytoplasm. It carries out the reaction 5-[(5-phospho-1-deoxy-D-ribulos-1-ylimino)methylamino]-1-(5-phospho-beta-D-ribosyl)imidazole-4-carboxamide + L-glutamine = D-erythro-1-(imidazol-4-yl)glycerol 3-phosphate + 5-amino-1-(5-phospho-beta-D-ribosyl)imidazole-4-carboxamide + L-glutamate + H(+). The protein operates within amino-acid biosynthesis; L-histidine biosynthesis; L-histidine from 5-phospho-alpha-D-ribose 1-diphosphate: step 5/9. Functionally, IGPS catalyzes the conversion of PRFAR and glutamine to IGP, AICAR and glutamate. The HisF subunit catalyzes the cyclization activity that produces IGP and AICAR from PRFAR using the ammonia provided by the HisH subunit. In Citrobacter koseri (strain ATCC BAA-895 / CDC 4225-83 / SGSC4696), this protein is Imidazole glycerol phosphate synthase subunit HisF.